The chain runs to 596 residues: Fructan 1-exohydrolase (596 aa).

Positions 1–20 (MAQAWAFLLPVLVLGSYVTS) are cleaved as a signal peptide. Residue Asp75 is part of the active site. Asn168, Asn236, and Asn248 each carry an N-linked (GlcNAc...) asparagine glycan. A disulfide bridge links Cys446 with Cys492. N-linked (GlcNAc...) asparagine glycosylation is present at Asn567.

This sequence belongs to the glycosyl hydrolase 32 family.

The catalysed reaction is Hydrolysis of terminal, non-reducing (2-&gt;1)-linked beta-D-fructofuranose residues in fructans.. Its activity is regulated as follows. Inhibited by sucrose. Functionally, hydrolyzes inulin-type beta-(2,1)-fructans. May play a role as a beta-(2,1)-trimmer during graminan biosynthesis. The chain is Fructan 1-exohydrolase from Aegilops tauschii (Tausch's goatgrass).